The following is a 437-amino-acid chain: Enolase (437 aa).

Glutamine 162 is a binding site for (2R)-2-phosphoglycerate. Residue glutamate 204 is the Proton donor of the active site. Aspartate 251, glutamate 297, and aspartate 324 together coordinate Mg(2+). Residues lysine 349, arginine 378, serine 379, and lysine 400 each contribute to the (2R)-2-phosphoglycerate site. The active-site Proton acceptor is the lysine 349.

It belongs to the enolase family. Mg(2+) serves as cofactor.

It localises to the cytoplasm. It is found in the secreted. The protein localises to the cell surface. The catalysed reaction is (2R)-2-phosphoglycerate = phosphoenolpyruvate + H2O. Its pathway is carbohydrate degradation; glycolysis; pyruvate from D-glyceraldehyde 3-phosphate: step 4/5. In terms of biological role, catalyzes the reversible conversion of 2-phosphoglycerate (2-PG) into phosphoenolpyruvate (PEP). It is essential for the degradation of carbohydrates via glycolysis. This is Enolase from Pelodictyon phaeoclathratiforme (strain DSM 5477 / BU-1).